The sequence spans 447 residues: MTRKYFGTDGVRGKVGDAPITPDFVMRLGHAAGKVLAHGARTGQGKPTVLIGKDTRISGYMLEAALEAGFTSAGVHVLLTGPLPTPGIAYLTRALRLSAGVVISASHNPYYDNGIKFFSASGDKLPDAVEAAIEAALDEPMVCAPSDDLGRARRIDDAAGRYIEFCKSTFPYEQDLHGLKLVVDCAHGAAYHIAPPVFHELGADVVAIGNQPNGRNINAGYGATAPEKLIEAVKANGADLGLAFDGDADRLQVVDADGRLYNGDELLYLIVRDRQAAGQAVPGAVGTLMTNMAVELALKREGVDFVRAKVGDRYVLEELNKRKWTLGGEGSGHLLCLDRHSTGDGIVSALQVLGALRRSGKTLAQLLDGVKLFPQTLINVRVQKGFDWQTHAGLQAARAAVEPELEGRGRVLIRASGTEPVVRVMVEAEQAEMAERAARKLADALGA.

The active-site Phosphoserine intermediate is the Ser106. Mg(2+) contacts are provided by Ser106, Asp245, Asp247, and Asp249. Position 106 is a phosphoserine (Ser106).

It belongs to the phosphohexose mutase family. Mg(2+) serves as cofactor. Post-translationally, activated by phosphorylation.

The enzyme catalyses alpha-D-glucosamine 1-phosphate = D-glucosamine 6-phosphate. Functionally, catalyzes the conversion of glucosamine-6-phosphate to glucosamine-1-phosphate. The sequence is that of Phosphoglucosamine mutase from Cupriavidus taiwanensis (strain DSM 17343 / BCRC 17206 / CCUG 44338 / CIP 107171 / LMG 19424 / R1) (Ralstonia taiwanensis (strain LMG 19424)).